The sequence spans 317 residues: Secreted frizzled-related protein 5 (317 aa).

A signal peptide spans Met-1–Cys-29. The FZ domain occupies Ser-48–Val-165. 8 disulfide bridges follow: Cys-53-Cys-116, Cys-63-Cys-109, Cys-100-Cys-135, Cys-124-Cys-162, Cys-128-Cys-152, Cys-181-Cys-253, Cys-184-Cys-255, and Cys-198-Cys-303. The region spanning Cys-181–Cys-303 is the NTR domain.

It belongs to the secreted frizzled-related protein (sFRP) family. In terms of tissue distribution, highly expressed in the retinal pigment epithelium (RPE) and pancreas. Weak expression in heart, liver and muscle.

It is found in the secreted. Functionally, soluble frizzled-related proteins (sFRPS) function as modulators of Wnt signaling through direct interaction with Wnts. They have a role in regulating cell growth and differentiation in specific cell types. SFRP5 may be involved in determining the polarity of photoreceptor, and perhaps, other cells in the retina. The sequence is that of Secreted frizzled-related protein 5 (SFRP5) from Homo sapiens (Human).